The primary structure comprises 149 residues: D-aminoacyl-tRNA deacylase (149 aa).

The short motif at 141-142 is the Gly-cisPro motif, important for rejection of L-amino acids element; sequence GP.

This sequence belongs to the DTD family. As to quaternary structure, homodimer.

Its subcellular location is the cytoplasm. It catalyses the reaction glycyl-tRNA(Ala) + H2O = tRNA(Ala) + glycine + H(+). The catalysed reaction is a D-aminoacyl-tRNA + H2O = a tRNA + a D-alpha-amino acid + H(+). An aminoacyl-tRNA editing enzyme that deacylates mischarged D-aminoacyl-tRNAs. Also deacylates mischarged glycyl-tRNA(Ala), protecting cells against glycine mischarging by AlaRS. Acts via tRNA-based rather than protein-based catalysis; rejects L-amino acids rather than detecting D-amino acids in the active site. By recycling D-aminoacyl-tRNA to D-amino acids and free tRNA molecules, this enzyme counteracts the toxicity associated with the formation of D-aminoacyl-tRNA entities in vivo and helps enforce protein L-homochirality. In Hydrogenovibrio crunogenus (strain DSM 25203 / XCL-2) (Thiomicrospira crunogena), this protein is D-aminoacyl-tRNA deacylase.